Consider the following 888-residue polypeptide: Glutamate receptor 3 (888 aa).

The signal sequence occupies residues 1-22 (MGQSVLRAVFFLVLGLLGHSHG). The Extracellular portion of the chain corresponds to 23-546 (GFPNTISIGG…GVFSFLDPLA (524 aa)). N-linked (GlcNAc...) asparagine glycosylation is found at asparagine 57, asparagine 260, asparagine 374, asparagine 409, and asparagine 416. Cysteine 85 and cysteine 334 are oxidised to a cystine. Positions 502, 504, and 509 each coordinate L-glutamate. Residues 547 to 567 (YEIWMCIVFAYIGVSVVLFLV) form a helical membrane-spanning segment. The Cytoplasmic portion of the chain corresponds to 568–596 (SRFSPYEWHLEDNNEEPRDPQSPPDPPNE). The helical; Pore-forming intramembrane region spans 597-612 (FGIFNSLWFSLGAFMQ). The stretch at 613–615 (QGC) is an intramembrane region. Residue cysteine 615 is the site of S-palmitoyl cysteine attachment. The Cytoplasmic segment spans residues 616–621 (DISPRS). Residues 622–642 (LSGRIVGGVWWFFTLIIISSY) traverse the membrane as a helical segment. The Extracellular portion of the chain corresponds to 643–817 (TANLAAFLTV…DKTSALSLSN (175 aa)). Residues serine 680, threonine 681, and glutamate 731 each contribute to the L-glutamate site. Residues cysteine 744 and cysteine 799 are joined by a disulfide bond. The chain crosses the membrane as a helical span at residues 818-838 (VAGVFYILVGGLGLAMMVALI). Topologically, residues 839–888 (EFCYKSRAESKRMKLTKNTQNFKPAPATNTQNYATYREGYNVYGTESVKI) are cytoplasmic. Cysteine 841 carries the S-palmitoyl cysteine lipid modification. 2 positions are modified to phosphotyrosine: tyrosine 871 and tyrosine 881.

It belongs to the glutamate-gated ion channel (TC 1.A.10.1) family. GRIA3 subfamily. In terms of assembly, homotetramer or heterotetramer of pore-forming glutamate receptor subunits. Tetramers may be formed by the dimerization of dimers. Interacts with PICK1, GRIP1 and GRIP2. Found in a complex with GRIA1, GRIA2, GRIA4, CNIH2, CNIH3, CACNG2, CACNG3, CACNG4, CACNG5, CACNG7 and CACNG8. Interacts with CACNG5. Found in a complex with GRIA1, GRIA2, GRIA4, DLG4, CACNG8 and CNIH2.

The protein resides in the cell membrane. Its subcellular location is the postsynaptic cell membrane. The protein localises to the postsynaptic density membrane. The enzyme catalyses Ca(2+)(in) = Ca(2+)(out). Functionally, ionotropic glutamate receptor that functions as a ligand-gated cation channel, gated by L-glutamate and glutamatergic agonists such as alpha-amino-3-hydroxy-5-methyl-4-isoxazolepropionic acid (AMPA), quisqualic acid, and kainic acid. L-glutamate acts as an excitatory neurotransmitter at many synapses in the central nervous system and plays an important role in fast excitatory synaptic transmission by inducing long-term potentiation. Binding of the excitatory neurotransmitter L-glutamate induces a conformation change, leading to the opening of the cation channel, and thereby converts the chemical signal to an electrical impulse upon entry of calcium. The receptor then desensitizes rapidly and enters a transient inactive state, characterized by the presence of bound agonist. In the presence of CACNG8, shows resensitization which is characterized by a delayed accumulation of current flux upon continued application of glutamate. This chain is Glutamate receptor 3, found in Mus musculus (Mouse).